A 125-amino-acid polypeptide reads, in one-letter code: Phosphoribosyl-AMP cyclohydrolase (125 aa).

Asp74 serves as a coordination point for Mg(2+). Position 75 (Cys75) interacts with Zn(2+). 2 residues coordinate Mg(2+): Asp76 and Asp78. Residues Cys92 and Cys99 each coordinate Zn(2+).

It belongs to the PRA-CH family. As to quaternary structure, homodimer. The cofactor is Mg(2+). Zn(2+) is required as a cofactor.

The protein resides in the cytoplasm. It carries out the reaction 1-(5-phospho-beta-D-ribosyl)-5'-AMP + H2O = 1-(5-phospho-beta-D-ribosyl)-5-[(5-phospho-beta-D-ribosylamino)methylideneamino]imidazole-4-carboxamide. It functions in the pathway amino-acid biosynthesis; L-histidine biosynthesis; L-histidine from 5-phospho-alpha-D-ribose 1-diphosphate: step 3/9. Its function is as follows. Catalyzes the hydrolysis of the adenine ring of phosphoribosyl-AMP. In Desulfatibacillum aliphaticivorans, this protein is Phosphoribosyl-AMP cyclohydrolase.